Consider the following 417-residue polypeptide: Cobalamin binding intrinsic factor (417 aa).

Residues 1–22 (MAWFSLHLLHLLWAAAGTSTWA) form the signal peptide. 3 cysteine pairs are disulfide-bonded: Cys26-Cys246, Cys103-Cys288, and Cys143-Cys182. The N-linked (GlcNAc...) asparagine glycan is linked to Asn100. Asp171 serves as a coordination point for cob(II)alamin. Position 191 is a phosphoserine (Ser191). The N-linked (GlcNAc...) asparagine glycan is linked to Asn209. Positions 222 and 270 each coordinate cob(II)alamin. Asn311 and Asn330 each carry an N-linked (GlcNAc...) asparagine glycan. Residues 365-370 (SWGLVV) and 386-395 (WQFLSGKTPL) contribute to the cob(II)alamin site. N-linked (GlcNAc...) asparagine glycosylation occurs at Asn413.

It belongs to the eukaryotic cobalamin transport proteins family. Interacts with CUBN (via CUB domains).

It is found in the secreted. In terms of biological role, promotes absorption of the essential vitamin cobalamin (Cbl) in the ileum. After interaction with CUBN, the CBLIF-cobalamin complex is internalized via receptor-mediated endocytosis. This Canis lupus familiaris (Dog) protein is Cobalamin binding intrinsic factor (CBLIF).